The chain runs to 420 residues: Cytochrome c biogenesis protein Ccs1 (420 aa).

3 helical membrane passes run 12–32 (LRFS…GTVI), 71–91 (TWWF…CTFL), and 157–177 (IAPI…IVGS).

The protein belongs to the Ccs1/CcsB family. As to quaternary structure, may interact with CcsA.

The protein localises to the plastid. It localises to the chloroplast thylakoid membrane. Its function is as follows. Required during biogenesis of c-type cytochromes (cytochrome c6 and cytochrome f) at the step of heme attachment. This is Cytochrome c biogenesis protein Ccs1 from Phaeodactylum tricornutum (strain CCAP 1055/1).